A 572-amino-acid chain; its full sequence is Moesin/ezrin/radixin homolog 1 (572 aa).

Residues 1–291 (MNVRVTTMDA…GNHELYMRRR (291 aa)) form the FERM domain. The interval 456–491 (TTTPSHHHVEEEEEMDNEEELVNGENGNQDFSKDFD) is disordered. Residues 466-477 (EEEEMDNEEELV) are compositionally biased toward acidic residues. T553 is subject to Phosphothreonine.

In terms of assembly, interacts with cytoskeletal actin.

Its subcellular location is the cell junction. It is found in the adherens junction. It localises to the cell projection. The protein localises to the microvillus. The protein resides in the rhabdomere. Its subcellular location is the cell membrane. It is found in the cytoplasm. It localises to the cytoskeleton. Its function is as follows. Involved in connections of major cytoskeletal structures to the plasma membrane. The polypeptide is Moesin/ezrin/radixin homolog 1 (Culex quinquefasciatus (Southern house mosquito)).